The primary structure comprises 333 residues: Fatty acid hydroxylase domain-containing protein 2 (333 aa).

Transmembrane regions (helical) follow at residues 29-49 (FILG…TWHL), 77-97 (ILFF…FNGL), 134-154 (TVLF…YPFL), 168-188 (FHWF…LFYY), 215-235 (VISL…PAIV), and 237-257 (PLVM…ALII). One can recognise a Fatty acid hydroxylase domain in the interval 176-299 (AIFTLIEEVL…LGVLDHLHGT (124 aa)).

Belongs to the sterol desaturase family.

The protein localises to the cytoplasm. It is found in the membrane. Its function is as follows. Promotes megakaryocyte differentiation by enhancing ERK phosphorylation and up-regulating RUNX1 expression. The protein is Fatty acid hydroxylase domain-containing protein 2 (FAXDC2) of Macaca fascicularis (Crab-eating macaque).